A 229-amino-acid polypeptide reads, in one-letter code: ATP-dependent Clp protease proteolytic subunit (229 aa).

Ser101 (nucleophile) is an active-site residue. The active site involves His126.

Belongs to the peptidase S14 family. Component of the chloroplastic Clp protease core complex.

It is found in the plastid. Its subcellular location is the chloroplast stroma. It carries out the reaction Hydrolysis of proteins to small peptides in the presence of ATP and magnesium. alpha-casein is the usual test substrate. In the absence of ATP, only oligopeptides shorter than five residues are hydrolyzed (such as succinyl-Leu-Tyr-|-NHMec, and Leu-Tyr-Leu-|-Tyr-Trp, in which cleavage of the -Tyr-|-Leu- and -Tyr-|-Trp bonds also occurs).. Functionally, cleaves peptides in various proteins in a process that requires ATP hydrolysis. Has a chymotrypsin-like activity. Plays a major role in the degradation of misfolded proteins. The chain is ATP-dependent Clp protease proteolytic subunit from Mesostigma viride (Green alga).